The chain runs to 262 residues: MKQAWNGWLLALQLFTTIPIRRSIAWNAAHVRWLVRCMPLAGALIGALSAGVYALFSTFSFSSPLVWALLLLWLGIWMAGGMHADGFMDVSDAFFSYRDVKRRQEIMSDPRVGAFAVLSLICLLSFRWLFLYESLQTGIPPALFAAVPLLSRAGAAWLLSVGKLAKPTGMAASLREYSSWRDAIWALGLAFVLLSLLCASTAISVQTGAALAAAAVVLAAAAKPWAEKQFGGITGDVLGALIEGGETVLWGVIWLLHSSVMG.

8 helical membrane-spanning segments follow: residues 4 to 26 (AWNGWLLALQLFTTIPIRRSIAW), 37 to 57 (CMPLAGALIGALSAGVYALFS), 59 to 79 (FSFSSPLVWALLLLWLGIWMA), 112 to 132 (VGAFAVLSLICLLSFRWLFLY), 139 to 159 (IPPALFAAVPLLSRAGAAWLL), 183 to 203 (AIWALGLAFVLLSLLCASTAI), 205 to 225 (VQTGAALAAAAVVLAAAAKPW), and 237 to 257 (VLGALIEGGETVLWGVIWLLH).

This sequence belongs to the CobS family. The cofactor is Mg(2+).

The protein resides in the cell membrane. The enzyme catalyses alpha-ribazole + adenosylcob(III)inamide-GDP = adenosylcob(III)alamin + GMP + H(+). The catalysed reaction is alpha-ribazole 5'-phosphate + adenosylcob(III)inamide-GDP = adenosylcob(III)alamin 5'-phosphate + GMP + H(+). The protein operates within cofactor biosynthesis; adenosylcobalamin biosynthesis; adenosylcobalamin from cob(II)yrinate a,c-diamide: step 7/7. Its function is as follows. Joins adenosylcobinamide-GDP and alpha-ribazole to generate adenosylcobalamin (Ado-cobalamin). Also synthesizes adenosylcobalamin 5'-phosphate from adenosylcobinamide-GDP and alpha-ribazole 5'-phosphate. The sequence is that of Adenosylcobinamide-GDP ribazoletransferase from Geobacillus kaustophilus (strain HTA426).